The following is a 487-amino-acid chain: WD repeat, SAM and U-box domain-containing protein 1 (487 aa).

7 WD repeats span residues 10 to 47 (SHRD…ELPF), 52 to 93 (GHGY…AVLE), 95 to 134 (PGRS…LRRT), 137 to 176 (VNDT…LHAE), 179 to 227 (AHDL…SAGI), 237 to 276 (GQSA…LLYT), and 279 to 318 (QHDR…SAQG). In terms of domain architecture, SAM spans 347–411 (WSEEEVLAWL…MKKIEELKMV (65 aa)). The region spanning 416–487 (GTPDEFLCPI…MAIFRWSTSQ (72 aa)) is the U-box domain.

The chain is WD repeat, SAM and U-box domain-containing protein 1 (wdsub1) from Danio rerio (Zebrafish).